The following is a 363-amino-acid chain: Ribosomal RNA large subunit methyltransferase M (363 aa).

S-adenosyl-L-methionine contacts are provided by residues serine 194, 227-230 (CPGG), aspartate 246, aspartate 266, and aspartate 284. Lysine 313 functions as the Proton acceptor in the catalytic mechanism.

The protein belongs to the class I-like SAM-binding methyltransferase superfamily. RNA methyltransferase RlmE family. RlmM subfamily. Monomer.

The protein localises to the cytoplasm. It catalyses the reaction cytidine(2498) in 23S rRNA + S-adenosyl-L-methionine = 2'-O-methylcytidine(2498) in 23S rRNA + S-adenosyl-L-homocysteine + H(+). In terms of biological role, catalyzes the 2'-O-methylation at nucleotide C2498 in 23S rRNA. The chain is Ribosomal RNA large subunit methyltransferase M from Haemophilus influenzae (strain PittGG).